The following is a 176-amino-acid chain: NAD(P)H-quinone oxidoreductase subunit 6, chloroplastic (176 aa).

The next 5 membrane-spanning stretches (helical) occupy residues 10-30 (ILMLFGGFILLLGGLGVVLLT), 33-53 (IYSAFSLGLVLVCISLFYFLL), 60-80 (VAQLLIYVGAINVLIIFAVMF), 95-115 (IGDGFTSLVCITFVFSLMTTI), and 152-172 (FYLPFELISIILLVSLIGAIT).

This sequence belongs to the complex I subunit 6 family. As to quaternary structure, NDH is composed of at least 16 different subunits, 5 of which are encoded in the nucleus.

The protein resides in the plastid. It is found in the chloroplast thylakoid membrane. The enzyme catalyses a plastoquinone + NADH + (n+1) H(+)(in) = a plastoquinol + NAD(+) + n H(+)(out). It catalyses the reaction a plastoquinone + NADPH + (n+1) H(+)(in) = a plastoquinol + NADP(+) + n H(+)(out). Its function is as follows. NDH shuttles electrons from NAD(P)H:plastoquinone, via FMN and iron-sulfur (Fe-S) centers, to quinones in the photosynthetic chain and possibly in a chloroplast respiratory chain. The immediate electron acceptor for the enzyme in this species is believed to be plastoquinone. Couples the redox reaction to proton translocation, and thus conserves the redox energy in a proton gradient. In Hordeum vulgare (Barley), this protein is NAD(P)H-quinone oxidoreductase subunit 6, chloroplastic (ndhG).